The following is a 182-amino-acid chain: Constitutive photomorphogenesis protein 10 (182 aa).

Residues 36 to 182 (ASGKRIQREM…AKEWTLRFAK (147 aa)) enclose the UBC core domain.

It belongs to the ubiquitin-conjugating enzyme family. As to quaternary structure, component of the CDD complex, at least composed of COP10, DET1 and DDB1A. Interacts with E3 ubiquitin ligase COP1. Interacts with E2 ubiquitin conjugating UBC5. Interacts with CSN3, CSN4 and CSN8 subunits of the COP9 complex. As to expression, expressed in flower, leaf, stem and seedling. Expressed at lower level in root.

The protein resides in the nucleus. In terms of biological role, component of light signal transduction machinery. Involved in repression of photomorphogenesis in darkness by participating in the CDD complex, a complex probably required to regulate the activity of ubiquitin conjugating enzymes (E2s). Repression of photomorphogenesis is probably mediated by ubiquitination and subsequent degradation of photomorphogenesis-promoting factors such as HY5, HYH and LAF1. Although strongly related to ubiquitin-conjugating enzyme, it has no catalytic activity by itself due to the absence of the conserved Cys active site at position 120. It can however enhance the activity of E2 conjugating enzymes. The protein is Constitutive photomorphogenesis protein 10 (COP10) of Arabidopsis thaliana (Mouse-ear cress).